The following is a 596-amino-acid chain: Endoribonuclease ZC3H12A (596 aa).

2 disordered regions span residues 1–48 (MSDP…TSEL) and 97–134 (QALT…EGSD). The segment covering 10–19 (VQESNPTMSL) has biased composition (polar residues). The tract at residues 42 to 87 (EAPTSELQMKVDFFRKLGYSSSEIHSVLQKLGVQADTNTVLGELVK) is ubiquitin association domain. Residues 81–150 (VLGELVKHGS…DGSNVAMSHG (70 aa)) form a necessary for interaction with TANK region. The segment at 112-281 (GGSTPKPSTL…DKFMPPDDPL (170 aa)) is RNase. The region spanning 135-290 (LRPVVIDGSN…LGRHGPSLDN (156 aa)) is the RNase NYN domain. The segment at 214 to 220 (RRVGGKR) is RNA binding. Mg(2+) is bound at residue D226. Disordered stretches follow at residues 278 to 306 (DDPL…KQPC) and 340 to 417 (NALL…PTEW). The C3H1-type zinc-finger motif lies at 301-324 (HRKQPCPYGKKCTYGIKCRFFHPE). Positions 301–454 (HRKQPCPYGK…SELWGVRGGS (154 aa)) are necessary for interaction with ZC3H12D. Position 344 is a phosphoserine (S344). A compositionally biased stretch (low complexity) spans 356–368 (QRPSPASQSSSVS). S435 and S439 each carry phosphoserine. Positions 511 to 543 (YWSEPYPLPPPTPVLQEPQRPSPGAGGGPWGRV) are disordered. Residues 524 to 533 (VLQEPQRPSP) are compositionally biased toward low complexity.

This sequence belongs to the ZC3H12 family. Oligomer. Found in a deubiquitination complex with TANK, USP10 and ZC3H12A; this complex inhibits genotoxic stress- or interleukin-1-beta-mediated NF-kappaB activation by promoting IKBKG or TRAF6 deubiquitination. Interacts with IKBKG; this interaction increases in response to DNA damage. Interacts with TANK; this interaction increases in response to DNA damage and serves as a bridge to anchor both TANK and USP10 into a deubiquitinating complex. Interacts with TRAF6; this interaction increases in response to DNA damage and is stimulated by TANK. Interacts with USP10; this interaction increases in response to DNA damage and serves as a bridge to anchor both TANK and USP10 into a deubiquitinating complex. Interacts with ZC3H12D. Interacts with TNRC6A. Interacts with IKBKB/IKKB. Interacts with IKBKB/IKKB. Interacts with IKBKB/IKKB. Interacts with BTRC; the interaction occurs when ZC3H12A is phosphorylated in a IKBKB/IKKB-dependent manner. Interacts with IRAK1; this interaction increases the interaction between ZC3H12A and IKBKB/IKKB. Interacts with UPF1; this interaction occurs in a mRNA translationally active- and termination-dependent manner and is essential for ZC3H12A-mediated degradation of target mRNAs. Associates with ribosomes. Interacts with ubiquitin. The cofactor is Mg(2+). In terms of processing, proteolytically cleaved between Arg-111 and Arg-214 by MALT1 in activated T-cells; cleavage at Arg-111 is critical for promoting ZC3H12A degradation in response to T-cell receptor (TCR) stimulation, and hence is necessary for prolonging the stability of a set of mRNAs controlling T-cell activation and Th17 cell differentiation. Phosphorylated by IRAK1; phosphorylation is necessary for subsequent phosphorylation by the I-kappa-B-kinase (IKK) complex. Phosphorylated by I-kappa-B-kinases (IKKs) at Ser-435 and Ser-439 upon lipopolysaccharide (LPS) or IL1B stimulation in macrophages through the MyD88-dependent signaling pathway; these phosphorylations promote rapid ubiquitin proteasome-mediated degradation of ZC3H12A in macrophages and hence allows its target mRNAs, such as IL6, to escape from degradation and accumulate during the inflammatory response. Post-translationally, ubiquitinated; ubiquitination is induced in response to interleukin IL1 receptor stimuli in a IKBKB/IKKB and IRAK1-dependent manner, leading to proteasome-mediated degradation. In terms of tissue distribution, expressed in CD4(+) helper T-cells (at protein level). Highly expressed in macrophages. Expressed in lung, lymph nodes, spleen and thymus. Expressed weakly in heart. Expressed weakly in cardiomyocytes (at protein level). Expressed in spleen, lung, intestine, brown adipose tissue and thymus. Weakly expressed in the heart. Weakly expressed in cardiomyocytes.

It localises to the nucleus. Its subcellular location is the cytoplasm. The protein localises to the rough endoplasmic reticulum membrane. It is found in the cytoplasmic granule. The protein resides in the P-body. Its function is as follows. Endoribonuclease involved in various biological functions such as cellular inflammatory response and immune homeostasis, glial differentiation of neuroprogenitor cells, cell death of cardiomyocytes, adipogenesis and angiogenesis. Functions as an endoribonuclease involved in mRNA decay. Modulates the inflammatory response by promoting the degradation of a set of translationally active cytokine-induced inflammation-related mRNAs, such as IL6 and IL12B, during the early phase of inflammation. Prevents aberrant T-cell-mediated immune reaction by degradation of multiple mRNAs controlling T-cell activation, such as those encoding cytokines (IL6 and IL2), cell surface receptors (ICOS, TNFRSF4 and TNFR2) and transcription factor (REL). Inhibits cooperatively with ZC3H12A the differentiation of helper T cells Th17 in lungs. They repress target mRNA encoding the Th17 cell-promoting factors IL6, ICOS, REL, IRF4, NFKBID and NFKBIZ. The cooperation requires RNA-binding by RC3H1 and the nuclease activity of ZC3H12A. Together with RC3H1, destabilizes TNFRSF4/OX40 mRNA by binding to the conserved stem loop structure in its 3'UTR. Self regulates by destabilizing its own mRNA. Cleaves mRNA harboring a stem-loop (SL), often located in their 3'-UTRs, during the early phase of inflammation in a helicase UPF1-dependent manner. Plays a role in the inhibition of microRNAs (miRNAs) biogenesis. Cleaves the terminal loop of a set of precursor miRNAs (pre-miRNAs) important for the regulation of the inflammatory response leading to their degradation, and thus preventing the biosynthesis of mature miRNAs. Also plays a role in promoting angiogenesis in response to inflammatory cytokines by inhibiting the production of antiangiogenic microRNAs via its anti-dicer RNase activity. Affects the overall ubiquitination of cellular proteins. Positively regulates deubiquitinase activity promoting the cleavage at 'Lys-48'- and 'Lys-63'-linked polyubiquitin chains on TNF receptor-associated factors (TRAFs), preventing JNK and NF-kappa-B signaling pathway activation, and hence negatively regulating macrophage-mediated inflammatory response and immune homeostasis. Induces also deubiquitination of the transcription factor HIF1A, probably leading to its stabilization and nuclear import, thereby positively regulating the expression of proangiogenic HIF1A-targeted genes. Involved in a TANK-dependent negative feedback response to attenuate NF-kappaB activation through the deubiquitination of IKBKG or TRAF6 in response to interleukin-1-beta (IL1B) stimulation or upon DNA damage. Prevents stress granules (SGs) formation and promotes macrophage apoptosis under stress conditions, including arsenite-induced oxidative stress, heat shock, and energy deprivation. Plays a role in the regulation of macrophage polarization; promotes IL4-induced polarization of macrophages M1 into anti-inflammatory M2 state. May also act as a transcription factor that regulates the expression of multiple genes involved in inflammatory response, angiogenesis, adipogenesis and apoptosis. Functions as a positive regulator of glial differentiation of neuroprogenitor cells through an amyloid precursor protein (APP)-dependent signaling pathway. Attenuates septic myocardial contractile dysfunction in response to lipopolysaccharide (LPS) by reducing I-kappa-B-kinase (IKK)-mediated NF-kappa-B activation, and hence myocardial pro-inflammatory cytokine production. This is Endoribonuclease ZC3H12A from Mus musculus (Mouse).